Reading from the N-terminus, the 919-residue chain is PAX3- and PAX7-binding protein 1 (919 aa).

Basic residues predominate over residues 1–11; sequence MFRKARRVNVR. Disordered stretches follow at residues 1 to 120, 151 to 206, and 237 to 277; these read MFRK…ENEE, KTEL…GGAF, and AREL…RIVF. Ser16 bears the Phosphoserine mark. Residues 16 to 28 show a composition bias toward acidic residues; sequence SEEEERERDEEQE. Over residues 49-59 the composition is skewed to low complexity; it reads RAPAGESLLGP. A compositionally biased stretch (gly residues) spans 75–87; sequence AEAGGGISGGAEP. Residue Lys151 forms a Glycyl lysine isopeptide (Lys-Gly) (interchain with G-Cter in SUMO1); alternate linkage. Lys151 participates in a covalent cross-link: Glycyl lysine isopeptide (Lys-Gly) (interchain with G-Cter in SUMO2); alternate. Phosphoserine is present on Ser160. The span at 163–174 shows a compositional bias: basic and acidic residues; it reads PLDKTCHAKDTN. Over residues 185–195 the composition is skewed to acidic residues; sequence GEDEMDMESEK. Ser193 carries the phosphoserine modification. The segment covering 237–258 has biased composition (basic and acidic residues); sequence ARELGDFTPHDSEPGKGRLVRE. Residues 259–270 are compositionally biased toward acidic residues; the sequence is DENDASDDEDDD. 4 positions are modified to phosphoserine: Ser264, Ser297, Ser559, and Ser560. Residues 380 to 560 are necessary and sufficient for interaction with PAX7; that stretch reads TPSNEMAPVT…MADHLEGLSS (181 aa). Positions 533–566 are disordered; it reads EREARRTRRRQAREQTGQMADHLEGLSSDDEETS. The residue at position 565 (Thr565) is a Phosphothreonine.

The protein belongs to the GCF family. As to quaternary structure, interacts with PAX3 and PAX7. Interacts with WDR5; associates with a histone methyltransferase (HMT) complex composed at least of RBBP5, ASH2L, SET1, SET2 and KMT2A/MLL1, KMT2D/MLL2, KMT2C/MLL3 and KMT2B/MLL4 through direct interaction with WDR5. As to expression, ubiquitously expressed in all tissues tested including skeletal muscle. Expressed in primary myoblasts.

It localises to the nucleus. Functionally, adapter protein linking the transcription factors PAX3 and PAX7 to the histone methylation machinery and involved in myogenesis. Associates with a histone methyltransferase complex that specifically mediates dimethylation and trimethylation of 'Lys-4' of histone H3. Mediates the recruitment of that complex to the transcription factors PAX3 and PAX7 on chromatin to regulate the expression of genes involved in muscle progenitor cells proliferation including ID3 and CDC20. The protein is PAX3- and PAX7-binding protein 1 (Paxbp1) of Mus musculus (Mouse).